The sequence spans 66 residues: U-limacoditoxin(59)-Dv128 (66 aa).

The signal sequence occupies residues 1 to 20; the sequence is MRHLLVLLLICLSVIAMAQA. A 3 X 16 AA tandem repeats of [FI]-G-G-G-L-G-G-A-V-G-G-R-R-R-R-D region spans residues 21–66; it reads TFGGGLGGAVGGRRRRDIGGGLGGAVGGRRRRDIGGGLGGAVGGKS. Tandem repeats lie at residues 22–37 and 38–53. G31 carries the glycine amide modification. The propeptide occupies 33–37; it reads RRRRD. G47 is modified (glycine amide). The propeptide occupies 49–53; sequence RRRRD. Residues 54 to 64 form a 3; half-length repeat; the sequence is IGGGLGGAVGG.

The protein belongs to the limacoditoxin-59 family. As to expression, expressed by the venom secretory cell of the spine. The spine is a cuticular structure containing a single large nucleated venom-secreting cell at its base. It is an independent unit capable of producing, storing and injecting venom. On the back of D.vulnerans caterpillars, spines are grouped together by 50 to 100 to form scoli, of which there are eight in D.vulnerans.

It localises to the secreted. Its function is as follows. Probable toxin. The protein is U-limacoditoxin(59)-Dv128 of Doratifera vulnerans (Mottled cup moth).